A 382-amino-acid polypeptide reads, in one-letter code: ATP phosphoribosyltransferase regulatory subunit (382 aa).

Belongs to the class-II aminoacyl-tRNA synthetase family. HisZ subfamily. In terms of assembly, heteromultimer composed of HisG and HisZ subunits.

It localises to the cytoplasm. The protein operates within amino-acid biosynthesis; L-histidine biosynthesis; L-histidine from 5-phospho-alpha-D-ribose 1-diphosphate: step 1/9. Required for the first step of histidine biosynthesis. May allow the feedback regulation of ATP phosphoribosyltransferase activity by histidine. The polypeptide is ATP phosphoribosyltransferase regulatory subunit (Burkholderia lata (strain ATCC 17760 / DSM 23089 / LMG 22485 / NCIMB 9086 / R18194 / 383)).